The following is a 171-amino-acid chain: Tetratricopeptide repeat protein 9C (171 aa).

3 TPR repeats span residues 8–41 (AQLY…LRGL), 72–107 (TDCY…QPDN), and 108–141 (AKAL…KPKD).

It belongs to the TTC9 family.

This Bos taurus (Bovine) protein is Tetratricopeptide repeat protein 9C (TTC9C).